The following is a 1469-amino-acid chain: uncharacterized protein (1469 aa).

Residues Gly-146 to Glu-180 are compositionally biased toward basic and acidic residues. 9 disordered regions span residues Gly-146–Gln-186, Ile-231–Asn-255, Thr-306–Ser-344, Leu-430–Tyr-455, Pro-520–Ser-560, Thr-654–Arg-706, Arg-719–Gln-755, Tyr-881–Asn-958, and Asn-1329–Asn-1369. Low complexity-rich tracts occupy residues Gln-232–Asn-241, Thr-306–Thr-327, Leu-430–Asn-449, Asn-523–Asn-559, and Thr-654–Pro-693. Over residues Arg-719–Lys-731 the composition is skewed to polar residues. Positions Ser-732–Pro-749 are enriched in pro residues. Low complexity-rich tracts occupy residues Asn-1329–Glu-1347 and Arg-1354–Asn-1369.

This is an uncharacterized protein from Dictyostelium discoideum (Social amoeba).